The sequence spans 899 residues: Calcium-transporting ATPase 1 (899 aa).

4 helical membrane-spanning segments follow: residues 59–79 (FVKD…VTLG), 80–100 (NIDD…VGFV), 247–267 (QLSL…FFQG), and 282–302 (VAAI…LGVL). Asp329 (4-aspartylphosphate intermediate) is an active-site residue. Transmembrane regions (helical) follow at residues 688–708 (FQLS…VFGF), 757–777 (QLLQ…IVVF), 827–847 (FNIA…ASPF), and 854–874 (EAIG…VLWV). The residue at position 892 (Ser892) is a Phosphoserine.

It belongs to the cation transport ATPase (P-type) (TC 3.A.3) family.

Its subcellular location is the endoplasmic reticulum membrane. The catalysed reaction is Ca(2+)(in) + ATP + H2O = Ca(2+)(out) + ADP + phosphate + H(+). Its function is as follows. Transports calcium and manganese ions into the cell. Regulates cell morphogenesis through control of manganese and calcium homeostasis. The sequence is that of Calcium-transporting ATPase 1 (pmr1) from Schizosaccharomyces pombe (strain 972 / ATCC 24843) (Fission yeast).